Here is a 215-residue protein sequence, read N- to C-terminus: tRNA (guanine-N(7)-)-methyltransferase (215 aa).

Residues glutamate 44, glutamate 69, aspartate 96, and aspartate 118 each contribute to the S-adenosyl-L-methionine site. Residue aspartate 118 is part of the active site. Residues lysine 122, aspartate 154, and 192 to 195 (TEYE) each bind substrate.

Belongs to the class I-like SAM-binding methyltransferase superfamily. TrmB family.

The catalysed reaction is guanosine(46) in tRNA + S-adenosyl-L-methionine = N(7)-methylguanosine(46) in tRNA + S-adenosyl-L-homocysteine. The protein operates within tRNA modification; N(7)-methylguanine-tRNA biosynthesis. Catalyzes the formation of N(7)-methylguanine at position 46 (m7G46) in tRNA. This Levilactobacillus brevis (strain ATCC 367 / BCRC 12310 / CIP 105137 / JCM 1170 / LMG 11437 / NCIMB 947 / NCTC 947) (Lactobacillus brevis) protein is tRNA (guanine-N(7)-)-methyltransferase.